Reading from the N-terminus, the 188-residue chain is Translation machinery-associated protein 22 (188 aa).

The region spanning 96–167 (VVIKRIERSK…GVEELITQML (72 aa)) is the SUI1 domain.

This sequence belongs to the DENR family. As to quaternary structure, interacts with the 40S ribosomal subunit.

It localises to the cytoplasm. This Yarrowia lipolytica (strain CLIB 122 / E 150) (Yeast) protein is Translation machinery-associated protein 22 (TMA22).